We begin with the raw amino-acid sequence, 290 residues long: Ribosomal RNA small subunit methyltransferase A (290 aa).

Residues N27, L29, G54, E75, D100, and N125 each coordinate S-adenosyl-L-methionine.

Belongs to the class I-like SAM-binding methyltransferase superfamily. rRNA adenine N(6)-methyltransferase family. RsmA subfamily.

It localises to the cytoplasm. It catalyses the reaction adenosine(1518)/adenosine(1519) in 16S rRNA + 4 S-adenosyl-L-methionine = N(6)-dimethyladenosine(1518)/N(6)-dimethyladenosine(1519) in 16S rRNA + 4 S-adenosyl-L-homocysteine + 4 H(+). Specifically dimethylates two adjacent adenosines (A1518 and A1519) in the loop of a conserved hairpin near the 3'-end of 16S rRNA in the 30S particle. May play a critical role in biogenesis of 30S subunits. This chain is Ribosomal RNA small subunit methyltransferase A, found in Streptococcus pneumoniae (strain ATCC BAA-255 / R6).